Consider the following 84-residue polypeptide: Cytochrome b559 subunit alpha (84 aa).

A helical transmembrane segment spans residues 22–36 (VIHSITIPSLFVAGW). Heme is bound at residue His24.

Belongs to the PsbE/PsbF family. As to quaternary structure, heterodimer of an alpha subunit and a beta subunit. PSII is composed of 1 copy each of membrane proteins PsbA, PsbB, PsbC, PsbD, PsbE, PsbF, PsbH, PsbI, PsbJ, PsbK, PsbL, PsbM, PsbT, PsbX, PsbY, PsbZ, Psb30/Ycf12, at least 3 peripheral proteins of the oxygen-evolving complex and a large number of cofactors. It forms dimeric complexes. The cofactor is heme b.

It localises to the plastid. Its subcellular location is the chloroplast thylakoid membrane. Functionally, this b-type cytochrome is tightly associated with the reaction center of photosystem II (PSII). PSII is a light-driven water:plastoquinone oxidoreductase that uses light energy to abstract electrons from H(2)O, generating O(2) and a proton gradient subsequently used for ATP formation. It consists of a core antenna complex that captures photons, and an electron transfer chain that converts photonic excitation into a charge separation. The protein is Cytochrome b559 subunit alpha of Gracilaria tenuistipitata var. liui (Red alga).